A 298-amino-acid polypeptide reads, in one-letter code: Protease HtpX homolog (298 aa).

The next 2 membrane-spanning stretches (helical) occupy residues 15-35 (LIMV…GYLF) and 38-58 (SPWT…LIMW). Residue H143 participates in Zn(2+) binding. The active site involves E144. Position 147 (H147) interacts with Zn(2+). The next 2 helical transmembrane spans lie at 153-173 (ILLS…SGIA) and 197-217 (IIFK…SASL). E227 provides a ligand contact to Zn(2+).

This sequence belongs to the peptidase M48B family. It depends on Zn(2+) as a cofactor.

The protein localises to the cell membrane. In Lactobacillus acidophilus (strain ATCC 700396 / NCK56 / N2 / NCFM), this protein is Protease HtpX homolog.